We begin with the raw amino-acid sequence, 543 residues long: Formate--tetrahydrofolate ligase (543 aa).

54–61 serves as a coordination point for ATP; sequence TPAGEGKT.

It belongs to the formate--tetrahydrofolate ligase family.

It carries out the reaction (6S)-5,6,7,8-tetrahydrofolate + formate + ATP = (6R)-10-formyltetrahydrofolate + ADP + phosphate. Its pathway is one-carbon metabolism; tetrahydrofolate interconversion. The chain is Formate--tetrahydrofolate ligase from Thermus thermophilus (strain ATCC BAA-163 / DSM 7039 / HB27).